Consider the following 1140-residue polypeptide: Eukaryotic translation initiation factor 3 subunit A (1140 aa).

The PCI domain maps to 319 to 502 (LQRMAAHVLL…NSIYFGTDLT (184 aa)). Composition is skewed to basic and acidic residues over residues 589-624 (QNNA…EERE), 830-900 (AAEE…RGGD), and 921-984 (ERND…EPDS). Disordered regions lie at residues 589–632 (QNNA…QNEI) and 830–1140 (AAEE…VKRR). Low complexity predominate over residues 987–998 (AAGAKDAGGAPA). Basic and acidic residues-rich tracts occupy residues 999 to 1050 (SRDD…EPQR), 1058 to 1086 (DAPR…RGDQ), and 1109 to 1130 (PRDE…KGGD).

The protein belongs to the eIF-3 subunit A family. In terms of assembly, component of the eukaryotic translation initiation factor 3 (eIF-3) complex. The eIF-3 complex interacts with pix.

The protein resides in the cytoplasm. In terms of biological role, RNA-binding component of the eukaryotic translation initiation factor 3 (eIF-3) complex, which is involved in protein synthesis of a specialized repertoire of mRNAs and, together with other initiation factors, stimulates binding of mRNA and methionyl-tRNAi to the 40S ribosome. The eIF-3 complex specifically targets and initiates translation of a subset of mRNAs involved in cell proliferation. The chain is Eukaryotic translation initiation factor 3 subunit A from Drosophila ananassae (Fruit fly).